Consider the following 511-residue polypeptide: GMP synthase [glutamine-hydrolyzing] (511 aa).

Positions 5 to 195 (LILVLDFGGQ…LYKICGCSGD (191 aa)) constitute a Glutamine amidotransferase type-1 domain. Cysteine 82 acts as the Nucleophile in catalysis. Catalysis depends on residues histidine 169 and glutamate 171. Residues 196 to 386 (WKMASFIEHS…LGIPEDIVMR (191 aa)) form the GMPS ATP-PPase domain. 223–229 (SGGVDSS) contributes to the ATP binding site.

In terms of assembly, homodimer.

It catalyses the reaction XMP + L-glutamine + ATP + H2O = GMP + L-glutamate + AMP + diphosphate + 2 H(+). It functions in the pathway purine metabolism; GMP biosynthesis; GMP from XMP (L-Gln route): step 1/1. Catalyzes the synthesis of GMP from XMP. This chain is GMP synthase [glutamine-hydrolyzing], found in Acetivibrio thermocellus (strain ATCC 27405 / DSM 1237 / JCM 9322 / NBRC 103400 / NCIMB 10682 / NRRL B-4536 / VPI 7372) (Clostridium thermocellum).